The primary structure comprises 266 residues: Large ribosomal subunit protein uL2c (266 aa).

The tract at residues 1–24 (MAIHLYKTSTPSTRNGTVDSQVKS) is disordered. The segment covering 7–24 (KTSTPSTRNGTVDSQVKS) has biased composition (polar residues).

This sequence belongs to the universal ribosomal protein uL2 family. As to quaternary structure, part of the 50S ribosomal subunit.

The protein localises to the plastid. It localises to the chloroplast. This is Large ribosomal subunit protein uL2c (rpl2) from Nicotiana debneyi (Debney's tobacco).